Reading from the N-terminus, the 638-residue chain is 1-deoxy-D-xylulose-5-phosphate synthase (638 aa).

Thiamine diphosphate-binding positions include His-71 and 112-114; that span reads SHA. Residue Asp-144 participates in Mg(2+) binding. Thiamine diphosphate contacts are provided by residues 145-146, Asn-173, Tyr-284, and Glu-365; that span reads GA. Asn-173 serves as a coordination point for Mg(2+).

It belongs to the transketolase family. DXPS subfamily. In terms of assembly, homodimer. Mg(2+) is required as a cofactor. The cofactor is thiamine diphosphate.

It catalyses the reaction D-glyceraldehyde 3-phosphate + pyruvate + H(+) = 1-deoxy-D-xylulose 5-phosphate + CO2. It functions in the pathway metabolic intermediate biosynthesis; 1-deoxy-D-xylulose 5-phosphate biosynthesis; 1-deoxy-D-xylulose 5-phosphate from D-glyceraldehyde 3-phosphate and pyruvate: step 1/1. Catalyzes the acyloin condensation reaction between C atoms 2 and 3 of pyruvate and glyceraldehyde 3-phosphate to yield 1-deoxy-D-xylulose-5-phosphate (DXP). This Mycobacterium sp. (strain JLS) protein is 1-deoxy-D-xylulose-5-phosphate synthase.